Consider the following 358-residue polypeptide: tRNA-specific 2-thiouridylase MnmA (358 aa).

ATP contacts are provided by residues 8–15 and M34; that span reads GMSGGVDS. The Nucleophile role is filled by C103. An intrachain disulfide couples C103 to C199. ATP is bound at residue G127. Positions 149–151 are interaction with tRNA; that stretch reads KDQ. Catalysis depends on C199, which acts as the Cysteine persulfide intermediate. Positions 305 to 306 are interaction with tRNA; sequence RY.

The protein belongs to the MnmA/TRMU family.

The protein localises to the cytoplasm. It catalyses the reaction S-sulfanyl-L-cysteinyl-[protein] + uridine(34) in tRNA + AH2 + ATP = 2-thiouridine(34) in tRNA + L-cysteinyl-[protein] + A + AMP + diphosphate + H(+). Its function is as follows. Catalyzes the 2-thiolation of uridine at the wobble position (U34) of tRNA, leading to the formation of s(2)U34. This is tRNA-specific 2-thiouridylase MnmA from Clostridium beijerinckii (strain ATCC 51743 / NCIMB 8052) (Clostridium acetobutylicum).